A 589-amino-acid chain; its full sequence is Vomeromodulin (589 aa).

A signal peptide spans M1 to S29. 2 disordered regions span residues G49 to G71 and L146 to Q170. Residues N419 and N437 are each glycosylated (N-linked (GlcNAc...) asparagine).

Post-translationally, N-glycosylated. The N-glycans consist mainly of complex sialylated and fucosylated biantennary structures. As to expression, abundant in the lateral nasal glands. Also present in the posterior septal and vomeronasal glands.

The protein localises to the secreted. The chain is Vomeromodulin from Rattus norvegicus (Rat).